Consider the following 432-residue polypeptide: Vacuolar protein sorting-associated protein 38 (432 aa).

N-linked (GlcNAc...) asparagine glycosylation is present at N20. Positions 216 to 287 (LDTYQENIKM…KEAIEKLQKK (72 aa)) form a coiled coil. Residues 348–365 (IINAMLGFYSLFIVIYSY) form a helical membrane-spanning segment.

This sequence belongs to the VPS38 family. As to quaternary structure, component of the VPS34 PI3-kinase complex II composed of VPS15, VPS30, VPS34 and VPS38.

Its subcellular location is the golgi apparatus. The protein resides in the trans-Golgi network membrane. It localises to the endosome membrane. In terms of biological role, involved in endosome-to-Golgi retrograde transport as part of the VPS34 PI3-kinase complex II. This complex is required for the endosome-to-Golgi retrieval of PEP1 and KEX2, and the recruitment of VPS5 and VPS7, two components of the retromer complex, to endosomal membranes (probably through generating a specific pool of phosphatidylinositol 3-phosphate allowing the recruitment of the retromer complex proteins to the endosome). Mediates the interaction between VPS30 and the VPS34-VPS15 core complex, leading to the recruitment of VPS30 to the membrane. The chain is Vacuolar protein sorting-associated protein 38 from Candida glabrata (strain ATCC 2001 / BCRC 20586 / JCM 3761 / NBRC 0622 / NRRL Y-65 / CBS 138) (Yeast).